Here is a 65-residue protein sequence, read N- to C-terminus: Small ribosomal subunit protein bS21 (65 aa).

The span at 46 to 57 shows a compositional bias: basic residues; sequence RLKRSRSKRRAQ. The segment at 46 to 65 is disordered; the sequence is RLKRSRSKRRAQRANEERNS.

This sequence belongs to the bacterial ribosomal protein bS21 family.

The polypeptide is Small ribosomal subunit protein bS21 (Chlorobaculum tepidum (strain ATCC 49652 / DSM 12025 / NBRC 103806 / TLS) (Chlorobium tepidum)).